A 26-amino-acid chain; its full sequence is PRKCH upstream open reading frame 2 (26 aa).

As to quaternary structure, interacts with protein kinase C eta as well as other protein kinases including PRKCD, PRKCQ and PRKCE but not with PRKCG or PRKCZ; the interactions lead to inhibition of kinase activity.

In terms of biological role, product of an upstream open reading frame (ORF) of PRKCH which regulates translation of the downstream protein kinase C eta (PKC-eta) ORF. Functions as a repressive element that maintains low basal levels of PKC-eta in growing cells but enhances its expression during stress conditions induced by amino acid starvation in a EIF2AK4/GCN2-dependent manner. In addition to its role in regulating PKC-eta translation, also inhibits the kinase activity of PKC-eta as well as other protein kinases including PRKCD, PRKCQ and PRKCE but not PRKCA, PRKCG or PRKCZ. This is PRKCH upstream open reading frame 2 from Homo sapiens (Human).